Here is a 130-residue protein sequence, read N- to C-terminus: Iron-sulfur cluster insertion protein ErpA 2 (130 aa).

Positions 58, 122, and 124 each coordinate iron-sulfur cluster.

This sequence belongs to the HesB/IscA family. Homodimer. Iron-sulfur cluster serves as cofactor.

Its function is as follows. Required for insertion of 4Fe-4S clusters for at least IspG. The sequence is that of Iron-sulfur cluster insertion protein ErpA 2 from Methylococcus capsulatus (strain ATCC 33009 / NCIMB 11132 / Bath).